The chain runs to 151 residues: Lipoprotein signal peptidase (151 aa).

2 helical membrane passes run 61 to 81 (GSQW…IWIG) and 88 to 107 (SRWQ…GNGI). Active-site residues include D117 and D133. A helical membrane pass occupies residues 128-148 (VFNLADVAINLAVLCLLIEAI).

The protein belongs to the peptidase A8 family.

It localises to the cell inner membrane. It catalyses the reaction Release of signal peptides from bacterial membrane prolipoproteins. Hydrolyzes -Xaa-Yaa-Zaa-|-(S,diacylglyceryl)Cys-, in which Xaa is hydrophobic (preferably Leu), and Yaa (Ala or Ser) and Zaa (Gly or Ala) have small, neutral side chains.. It functions in the pathway protein modification; lipoprotein biosynthesis (signal peptide cleavage). Functionally, this protein specifically catalyzes the removal of signal peptides from prolipoproteins. This chain is Lipoprotein signal peptidase, found in Synechococcus sp. (strain RCC307).